The chain runs to 223 residues: Phosphoribosylformylglycinamidine synthase subunit PurQ (223 aa).

Residues Phe3–Val223 enclose the Glutamine amidotransferase type-1 domain. Cys85 serves as the catalytic Nucleophile. Active-site residues include His193 and Glu195.

As to quaternary structure, part of the FGAM synthase complex composed of 1 PurL, 1 PurQ and 2 PurS subunits.

The protein resides in the cytoplasm. It carries out the reaction N(2)-formyl-N(1)-(5-phospho-beta-D-ribosyl)glycinamide + L-glutamine + ATP + H2O = 2-formamido-N(1)-(5-O-phospho-beta-D-ribosyl)acetamidine + L-glutamate + ADP + phosphate + H(+). The enzyme catalyses L-glutamine + H2O = L-glutamate + NH4(+). It functions in the pathway purine metabolism; IMP biosynthesis via de novo pathway; 5-amino-1-(5-phospho-D-ribosyl)imidazole from N(2)-formyl-N(1)-(5-phospho-D-ribosyl)glycinamide: step 1/2. Part of the phosphoribosylformylglycinamidine synthase complex involved in the purines biosynthetic pathway. Catalyzes the ATP-dependent conversion of formylglycinamide ribonucleotide (FGAR) and glutamine to yield formylglycinamidine ribonucleotide (FGAM) and glutamate. The FGAM synthase complex is composed of three subunits. PurQ produces an ammonia molecule by converting glutamine to glutamate. PurL transfers the ammonia molecule to FGAR to form FGAM in an ATP-dependent manner. PurS interacts with PurQ and PurL and is thought to assist in the transfer of the ammonia molecule from PurQ to PurL. The sequence is that of Phosphoribosylformylglycinamidine synthase subunit PurQ from Staphylococcus aureus (strain Mu50 / ATCC 700699).